The sequence spans 260 residues: 3-methyl-2-oxobutanoate hydroxymethyltransferase (260 aa).

Residues Asp42 and Asp81 each contribute to the Mg(2+) site. 3-methyl-2-oxobutanoate is bound by residues 42 to 43 (DS), Asp81, and Lys109. Glu111 serves as a coordination point for Mg(2+). The active-site Proton acceptor is Glu178.

It belongs to the PanB family. As to quaternary structure, homodecamer; pentamer of dimers. The cofactor is Mg(2+).

Its subcellular location is the cytoplasm. It catalyses the reaction 3-methyl-2-oxobutanoate + (6R)-5,10-methylene-5,6,7,8-tetrahydrofolate + H2O = 2-dehydropantoate + (6S)-5,6,7,8-tetrahydrofolate. The protein operates within cofactor biosynthesis; (R)-pantothenate biosynthesis; (R)-pantoate from 3-methyl-2-oxobutanoate: step 1/2. Its function is as follows. Catalyzes the reversible reaction in which hydroxymethyl group from 5,10-methylenetetrahydrofolate is transferred onto alpha-ketoisovalerate to form ketopantoate. The protein is 3-methyl-2-oxobutanoate hydroxymethyltransferase of Vesicomyosocius okutanii subsp. Calyptogena okutanii (strain HA).